The sequence spans 216 residues: Ribosomal RNA small subunit methyltransferase G (216 aa).

Residues Gly-83, Met-88, 134–135 (VE), and Arg-149 contribute to the S-adenosyl-L-methionine site.

It belongs to the methyltransferase superfamily. RNA methyltransferase RsmG family.

The protein localises to the cytoplasm. The catalysed reaction is guanosine(527) in 16S rRNA + S-adenosyl-L-methionine = N(7)-methylguanosine(527) in 16S rRNA + S-adenosyl-L-homocysteine. Specifically methylates the N7 position of guanine in position 527 of 16S rRNA. In Pseudomonas putida (strain ATCC 700007 / DSM 6899 / JCM 31910 / BCRC 17059 / LMG 24140 / F1), this protein is Ribosomal RNA small subunit methyltransferase G.